Consider the following 318-residue polypeptide: NADH-ubiquinone oxidoreductase chain 1 (318 aa).

8 helical membrane-spanning segments follow: residues 2-22 (PMINLLLLILPTLIAMAFLML), 69-89 (ALYIIAPTLALTIALLLWTPL), 100-120 (LGLLFILATSSLTVYSILWSG), 147-167 (AIILLSVLLMSGSFNLSTLIT), 171-191 (HIWLLLPTWPLAMMWFISTLA), 222-242 (LFFMAEYVNIIMMNALTTMIF), 253-273 (ELYTTCFTIKTLLLTSLFLWI), and 294-314 (LPLTLTLLMWYISLSTMIASI).

The protein belongs to the complex I subunit 1 family. As to quaternary structure, core subunit of respiratory chain NADH dehydrogenase (Complex I) which is composed of 45 different subunits.

It localises to the mitochondrion inner membrane. The enzyme catalyses a ubiquinone + NADH + 5 H(+)(in) = a ubiquinol + NAD(+) + 4 H(+)(out). Functionally, core subunit of the mitochondrial membrane respiratory chain NADH dehydrogenase (Complex I) which catalyzes electron transfer from NADH through the respiratory chain, using ubiquinone as an electron acceptor. Essential for the catalytic activity and assembly of complex I. This is NADH-ubiquinone oxidoreductase chain 1 (MT-ND1) from Hylobates lar (Lar gibbon).